Consider the following 259-residue polypeptide: MKIEDCTVEENVQIAKDTYKMKIKGNFVKECRTPGQFVNIRIGDGREHVLRRPISISEIDRGENLVTIIYRIVGEGTKFMANIKKGNEIDVMGPLGRGYDVLSLTKEQTALLVGGGIGVPPLYELAKQFNKRGIKTIIILGFNSKDEVFYEDEFKKFGETYVSTIDGSVGTKGFVTDVIKKLQAENNLVFDKYYSCGPVPMLKALVNAVGEDGYISLENRMACGIGACYACVCKKKKKDDYTRVCYDGPVYLASDVEIE.

One can recognise an FAD-binding FR-type domain in the interval 1 to 101; the sequence is MKIEDCTVEE…MGPLGRGYDV (101 aa). FAD is bound by residues 52–55, 69–71, and 76–77; these read RPIS, IYR, and GT. [2Fe-2S] cluster-binding residues include Cys-223, Cys-228, Cys-231, and Cys-245.

It belongs to the PyrK family. As to quaternary structure, heterotetramer of 2 PyrK and 2 PyrD type B subunits. The cofactor is [2Fe-2S] cluster. It depends on FAD as a cofactor.

It participates in pyrimidine metabolism; UMP biosynthesis via de novo pathway; orotate from (S)-dihydroorotate (NAD(+) route): step 1/1. Functionally, responsible for channeling the electrons from the oxidation of dihydroorotate from the FMN redox center in the PyrD type B subunit to the ultimate electron acceptor NAD(+). In Fusobacterium nucleatum subsp. nucleatum (strain ATCC 25586 / DSM 15643 / BCRC 10681 / CIP 101130 / JCM 8532 / KCTC 2640 / LMG 13131 / VPI 4355), this protein is Dihydroorotate dehydrogenase B (NAD(+)), electron transfer subunit.